A 366-amino-acid polypeptide reads, in one-letter code: Chalcone synthase B (366 aa).

Cys172 is a catalytic residue.

This sequence belongs to the thiolase-like superfamily. Chalcone/stilbene synthases family.

The enzyme catalyses (E)-4-coumaroyl-CoA + 3 malonyl-CoA + 3 H(+) = 2',4,4',6'-tetrahydroxychalcone + 3 CO2 + 4 CoA. Its pathway is secondary metabolite biosynthesis; flavonoid biosynthesis. The primary product of this enzyme is 4,2',4',6'-tetrahydroxychalcone (also termed naringenin-chalcone or chalcone) which can under specific conditions spontaneously isomerize into naringenin. The protein is Chalcone synthase B (CHSB) of Ipomoea trifida (Morning glory).